The following is a 283-amino-acid chain: 4-diphosphocytidyl-2-C-methyl-D-erythritol kinase (283 aa).

The active site involves Lys12. 99–109 provides a ligand contact to ATP; the sequence is PLAAGIGGGSA. The active site involves Asp141.

It belongs to the GHMP kinase family. IspE subfamily.

The catalysed reaction is 4-CDP-2-C-methyl-D-erythritol + ATP = 4-CDP-2-C-methyl-D-erythritol 2-phosphate + ADP + H(+). It functions in the pathway isoprenoid biosynthesis; isopentenyl diphosphate biosynthesis via DXP pathway; isopentenyl diphosphate from 1-deoxy-D-xylulose 5-phosphate: step 3/6. Its function is as follows. Catalyzes the phosphorylation of the position 2 hydroxy group of 4-diphosphocytidyl-2C-methyl-D-erythritol. The chain is 4-diphosphocytidyl-2-C-methyl-D-erythritol kinase from Sphingopyxis alaskensis (strain DSM 13593 / LMG 18877 / RB2256) (Sphingomonas alaskensis).